The following is a 101-amino-acid chain: Pro-corazonin (101 aa).

Residues 1 to 19 (MVTNITLILTLMTLASVTA) form the signal peptide. Q20 is subject to Pyrrolidone carboxylic acid. Position 30 is an asparagine amide (N30).

Belongs to the corazonin family.

Its subcellular location is the secreted. Its function is as follows. Cardioactive peptide. Corazonin is probably involved in the physiological regulation of the heart beat. This chain is Pro-corazonin (crz), found in Bombyx mori (Silk moth).